The primary structure comprises 500 residues: Na(+)/H(+) antiporter NhaB (500 aa).

Transmembrane regions (helical) follow at residues 28-50, 58-78, 96-116, 129-149, 150-170, 205-225, 241-261, 311-331, 350-370, 394-414, 449-469, and 477-497; these read FLML…LLVI, MALK…ALLL, VILL…LLLF, ALLA…LDAL, TVTA…HRVA, LLMH…VGEP, FFLK…VTCL, ILIA…LMVI, FKDA…VAVI, MLFI…VATI, VATP…IAPL, and MVWM…YAVS.

This sequence belongs to the NhaB Na(+)/H(+) (TC 2.A.34) antiporter family.

It localises to the cell inner membrane. The catalysed reaction is 2 Na(+)(in) + 3 H(+)(out) = 2 Na(+)(out) + 3 H(+)(in). Its function is as follows. Na(+)/H(+) antiporter that extrudes sodium in exchange for external protons. The polypeptide is Na(+)/H(+) antiporter NhaB (Pseudomonas fluorescens (strain Pf0-1)).